The sequence spans 333 residues: MFRAAAPGQLRRAASSLRFQSTLVIAEHANDSLAPITLNTITAATRLGGEVSCLVAGTKCDKVAQDLCKVAGIAKVLVAQHDAYRGLLAEDLTPLILATQKQFNYTHICAGASAFGKNLLPRVAAKLEVAPISDIIAIKSPDTFVRTIYAGNALCTVKCDEKVKVFSVRGTSFEAAATSGGTASSEKASSTSPVEISEWLDQKLTKSDRPELTGAKVVVSGGRGLKSGENFKLLYDLADQLHAAVGASRAAVDAGFVPNDMQVGQTGKIVAPELYIAVGISGAIQHLAGMKDSKTIVAINKDPEAPIFQVADYGIVADLFKVVPEMTEILKKK.

Residues 1-19 (MFRAAAPGQLRRAASSLRF) constitute a mitochondrion transit peptide. Positions 20–204 (QSTLVIAEHA…EISEWLDQKL (185 aa)) are domain I. Lys59 is modified (N6-acetyllysine; alternate). Lys59 carries the post-translational modification N6-succinyllysine; alternate. N6-acetyllysine is present on Lys62. Lys69 bears the N6-acetyllysine; alternate mark. Lys69 bears the N6-succinyllysine; alternate mark. An N6-acetyllysine modification is found at Lys75. Thr93 is modified (phosphothreonine). 2 positions are modified to N6-acetyllysine: Lys101 and Lys139. Ser140 bears the Phosphoserine mark. The residue at position 158 (Lys158) is an N6-acetyllysine; alternate. Lys158 carries the N6-succinyllysine; alternate modification. Lys164 is subject to N6-acetyllysine. Lys187 carries the N6-succinyllysine modification. Lys203 is modified (N6-acetyllysine; alternate). Lys203 is subject to N6-succinyllysine; alternate. The domain II stretch occupies residues 205–333 (TKSDRPELTG…PEMTEILKKK (129 aa)). Lys216 carries the post-translational modification N6-succinyllysine. An FAD-binding site is contributed by Arg223. Lys226 and Lys232 each carry N6-acetyllysine; alternate. Lys226 and Lys232 each carry N6-succinyllysine; alternate. FAD contacts are provided by residues Ser248, 263 to 266 (VGQT), 281 to 286 (SGAIQH), and Asn300. N6-succinyllysine is present on Lys301. Residue 318–319 (DL) participates in FAD binding.

Belongs to the ETF alpha-subunit/FixB family. As to quaternary structure, heterodimer composed of ETFA and ETFB. Identified in a complex that contains ETFA, ETFB and ETFRF1. Interaction with ETFRF1 promotes dissociation of the bound FAD and loss of electron transfer activity. Interacts with TASOR. FAD is required as a cofactor.

It is found in the mitochondrion matrix. In terms of biological role, heterodimeric electron transfer flavoprotein that accepts electrons from several mitochondrial dehydrogenases, including acyl-CoA dehydrogenases, glutaryl-CoA and sarcosine dehydrogenase. It transfers the electrons to the main mitochondrial respiratory chain via ETF-ubiquinone oxidoreductase (ETF dehydrogenase). Required for normal mitochondrial fatty acid oxidation and normal amino acid metabolism. This Macaca fascicularis (Crab-eating macaque) protein is Electron transfer flavoprotein subunit alpha, mitochondrial (ETFA).